The sequence spans 486 residues: Hexosaminidase D (486 aa).

Catalysis depends on glutamate 149, which acts as the Proton donor.

This sequence belongs to the glycosyl hydrolase 20 family. As to quaternary structure, homodimer; disulfide-linked. Expressed in synovial fibroblasts and synovial membranes.

The protein resides in the cytoplasm. It localises to the nucleus. It is found in the extracellular vesicle. The catalysed reaction is Hydrolysis of terminal non-reducing N-acetyl-D-hexosamine residues in N-acetyl-beta-D-hexosaminides.. Its activity is regulated as follows. Inhibited by O-(2-acetamido-2-deoxy-D-glucopyranosylidene)amino N-phenylcarbamate (PUGNAc). Inhibited by galacto-NAG-thiazoline. Has hexosaminidase activity. Responsible for the cleavage of the monosaccharides N-acetylglucosamine (GlcNAc) and N-acetylgalactosamine (GalNAc) from cellular substrates. Has a preference for galactosaminide over glucosaminide substrates. In Homo sapiens (Human), this protein is Hexosaminidase D.